Here is a 284-residue protein sequence, read N- to C-terminus: 4-diphosphocytidyl-2-C-methyl-D-erythritol kinase (284 aa).

Lys14 is a catalytic residue. 98–108 (PMGGGLGGGSS) is a binding site for ATP. Residue Asp140 is part of the active site.

This sequence belongs to the GHMP kinase family. IspE subfamily.

It catalyses the reaction 4-CDP-2-C-methyl-D-erythritol + ATP = 4-CDP-2-C-methyl-D-erythritol 2-phosphate + ADP + H(+). It functions in the pathway isoprenoid biosynthesis; isopentenyl diphosphate biosynthesis via DXP pathway; isopentenyl diphosphate from 1-deoxy-D-xylulose 5-phosphate: step 3/6. Functionally, catalyzes the phosphorylation of the position 2 hydroxy group of 4-diphosphocytidyl-2C-methyl-D-erythritol. This Shewanella sp. (strain MR-7) protein is 4-diphosphocytidyl-2-C-methyl-D-erythritol kinase.